A 340-amino-acid polypeptide reads, in one-letter code: 7,8-didemethyl-8-hydroxy-5-deazariboflavin synthase (340 aa).

The Radical SAM core domain occupies 25 to 256; it reads ATYSPAYTIV…SDITIQIPPN (232 aa). The [4Fe-4S] cluster site is built by Cys39, Cys43, and Cys46.

It belongs to the radical SAM superfamily. CofG family. Consists of two subunits, CofG and CofH. [4Fe-4S] cluster is required as a cofactor.

The enzyme catalyses 5-amino-5-(4-hydroxybenzyl)-6-(D-ribitylimino)-5,6-dihydrouracil + S-adenosyl-L-methionine = 7,8-didemethyl-8-hydroxy-5-deazariboflavin + 5'-deoxyadenosine + L-methionine + NH4(+) + H(+). It functions in the pathway cofactor biosynthesis; coenzyme F0 biosynthesis. Catalyzes the radical-mediated synthesis of 7,8-didemethyl-8-hydroxy-5-deazariboflavin from 5-amino-5-(4-hydroxybenzyl)-6-(D-ribitylimino)-5,6-dihydrouracil. The polypeptide is 7,8-didemethyl-8-hydroxy-5-deazariboflavin synthase (Trichormus variabilis (strain ATCC 29413 / PCC 7937) (Anabaena variabilis)).